The following is a 198-amino-acid chain: Ribosome maturation factor RimM (198 aa).

The PRC barrel domain maps to 92-168; the sequence is DDEYYHADLI…IELPAEIEGE (77 aa). The span at 163-172 shows a compositional bias: acidic residues; it reads AEIEGEDQDS. The segment at 163–198 is disordered; sequence AEIEGEDQDSSDNAGSPEGDAAASNSARHPRESGDP.

This sequence belongs to the RimM family. As to quaternary structure, binds ribosomal protein uS19.

It localises to the cytoplasm. Functionally, an accessory protein needed during the final step in the assembly of 30S ribosomal subunit, possibly for assembly of the head region. Essential for efficient processing of 16S rRNA. May be needed both before and after RbfA during the maturation of 16S rRNA. It has affinity for free ribosomal 30S subunits but not for 70S ribosomes. This is Ribosome maturation factor RimM from Bradyrhizobium sp. (strain BTAi1 / ATCC BAA-1182).